The primary structure comprises 571 residues: MTFRDLLSVNFEGSRSDGSAGGASAGGSGGGSGGAAASEGRAVDGVPGTAGSGGVVGAGSDENNRSSAGEPGAAGAGGEVNGTAAVGGLVVSAQGVGVGVFLAAFILMAVAGNLLVILSVACNRHLQTVTNYFIVNLAVADLLLSATVLPFSATMEVLGFWAFGRAFCDVWAAVDVLCCTASILSLCTISVDRYVGVRHSLKYPSIMTERKAAAILALLWAVAIVVSVGPLLGWKEPVPPDERFCGITEEAGYAVFSSLCSFYLPMAVIVVMYCRVYVVARSTTRSLEAGVKRERGKASEVVLRIHCRGSSTGTDRGHGAMRSTKGHTFRSSLSLRLLKFSREKKAAKTLAIVVGVFVLCWFPFFFVLPLGSLFPQLKPSEGVFKVIFWLGYFNSCVNPLIYPCSSREFKRAFLRLLRCQCHHSRRRRRPLWRAYGHHWLASNGGPRPDCAPGLGAAPREAPLALPAPEATDTPSAPEAQAPVVGRRKPPYSFRDWRLLGPFRRPTTQLRAKVSSLSQKIRAGSAPCAEAPCALRSEVEAVSLNVPHDAAEGATWQAYELADYSHLRETDI.

Over 1–94 (MTFRDLLSVN…AVGGLVVSAQ (94 aa)) the chain is Extracellular. Positions 13–75 (GSRSDGSAGG…SSAGEPGAAG (63 aa)) are disordered. Over residues 19 to 34 (SAGGASAGGSGGGSGG) the composition is skewed to gly residues. Low complexity predominate over residues 35 to 47 (AAASEGRAVDGVP). The segment covering 48–57 (GTAGSGGVVG) has biased composition (gly residues). 2 N-linked (GlcNAc...) asparagine glycosylation sites follow: N64 and N81. The chain crosses the membrane as a helical span at residues 95–120 (GVGVGVFLAAFILMAVAGNLLVILSV). The Cytoplasmic portion of the chain corresponds to 121 to 132 (ACNRHLQTVTNY). Residues 133–158 (FIVNLAVADLLLSATVLPFSATMEVL) form a helical membrane-spanning segment. The Extracellular segment spans residues 159–168 (GFWAFGRAFC). The helical transmembrane segment at 169-191 (DVWAAVDVLCCTASILSLCTISV) threads the bilayer. At 192–212 (DRYVGVRHSLKYPSIMTERKA) the chain is on the cytoplasmic side. The chain crosses the membrane as a helical span at residues 213-237 (AAILALLWAVAIVVSVGPLLGWKEP). The Extracellular segment spans residues 238-250 (VPPDERFCGITEE). The chain crosses the membrane as a helical span at residues 251–274 (AGYAVFSSLCSFYLPMAVIVVMYC). Residues 275–348 (RVYVVARSTT…KFSREKKAAK (74 aa)) lie on the Cytoplasmic side of the membrane. Residues 349–373 (TLAIVVGVFVLCWFPFFFVLPLGSL) form a helical membrane-spanning segment. The Extracellular segment spans residues 374 to 380 (FPQLKPS). A helical membrane pass occupies residues 381-405 (EGVFKVIFWLGYFNSCVNPLIYPCS). The Cytoplasmic portion of the chain corresponds to 406–571 (SREFKRAFLR…DYSHLRETDI (166 aa)). C419 carries the S-palmitoyl cysteine lipid modification. The tract at residues 465 to 487 (LPAPEATDTPSAPEAQAPVVGRR) is disordered.

It belongs to the G-protein coupled receptor 1 family. Adrenergic receptor subfamily. ADRA1D sub-subfamily. As to quaternary structure, interacts with FLNA (via filamin repeat 21); increases PKA-mediated phosphorylation of FLNA. Palmitoylated. Palmitoylation by ZDHHC21 may increase the expression of the receptor and regulate downstream signaling.

Its subcellular location is the cell membrane. In terms of biological role, this alpha-adrenergic receptor mediates its effect through the influx of extracellular calcium. This Sus scrofa (Pig) protein is Alpha-1D adrenergic receptor (ADRA1D).